Here is a 74-residue protein sequence, read N- to C-terminus: CLAVATA3/ESR (CLE)-related protein 19 (74 aa).

The N-terminal stretch at 1-24 is a signal peptide; the sequence is MKIKGLMILASSLLILAFIHQSES. 2 N-linked (GlcNAc...) asparagine glycosylation sites follow: Asn34 and Asn54. 2 positions are modified to hydroxyproline: Pro65 and Pro68. O-linked (Ara...) hydroxyproline glycosylation is present at Pro68.

It belongs to the CLV3/ESR signal peptide family. Post-translationally, the O-glycosylation (arabinosylation) of the hydroxyproline Pro-68 enhances binding affinity of the CLE19p peptide for its receptor. Mostly expressed in heart-shape embryos, pollen and young flower buds, and, to a lower extent, in inflorescence, leaves and roots.

The protein resides in the secreted. It is found in the extracellular space. Extracellular signal peptide that regulates cell fate. Represses root apical meristem maintenance. This Arabidopsis thaliana (Mouse-ear cress) protein is CLAVATA3/ESR (CLE)-related protein 19.